We begin with the raw amino-acid sequence, 479 residues long: MNRNPDQNTLPNITLKIIETYLGRIPSVNEYHMLKLQARNIQKITVFNKDIFVSLVKKNKKRFFSDVDTSASEIKDRILSYFSKQTQTYNIGKLFTIIELQSVLVTTYTDILGVLTIKAPNVISSKISYNVTSMEELARDMLNSMNVAVIDKAKVMGRHNVSSLVKNVNKLMEEYLRRHNKSCICYGSYSLYLINPNIRYGDIDILQTNSRTFLIDLAFLIKFITGNNIILSKIPYLRNYMVIKDENDNHIIDSFNIRQDTMNVVPKIFIDNIYIVDPTFQLLNMIKMFSQIDRLEDLSKDPEKFNARMATMLEYVRYTHGIVFDGTRNNMPMKCIIDENNRIVTVTTKDYFSFKKCLVYLDENVLSSDILDLNADTSCDFESVTNSVYLIHDNIMYTYFSNTILLSDKGKVHEISARGLCAHILLYQMLTSGEYKQCLSDLLNSMMNRDKIPIYSHTERDKKPGRHGFINIEKDIIVF.

Catalysis depends on residues D202 and D204. Ca(2+) is bound by residues D202, D204, and D253.

The protein belongs to the poxviridae poly(A) polymerase catalytic subunit family. Heterodimer of a large (catalytic) subunit and a small (regulatory) subunit.

The enzyme catalyses RNA(n) + ATP = RNA(n)-3'-adenine ribonucleotide + diphosphate. Polymerase that creates the 3'-poly(A) tail of mRNA's. The polypeptide is Poly(A) polymerase catalytic subunit (OPG063) (Bos taurus (Bovine)).